The following is a 265-amino-acid chain: tRNA pseudouridine synthase A (265 aa).

Residue Asp58 is the Nucleophile of the active site. Tyr116 contacts substrate.

The protein belongs to the tRNA pseudouridine synthase TruA family. As to quaternary structure, homodimer.

The enzyme catalyses uridine(38/39/40) in tRNA = pseudouridine(38/39/40) in tRNA. Formation of pseudouridine at positions 38, 39 and 40 in the anticodon stem and loop of transfer RNAs. This chain is tRNA pseudouridine synthase A, found in Neisseria meningitidis serogroup B (strain ATCC BAA-335 / MC58).